We begin with the raw amino-acid sequence, 301 residues long: Ornithine carbamoyltransferase (301 aa).

Carbamoyl phosphate contacts are provided by residues 53–56 (STRT), glutamine 80, arginine 104, and 131–134 (HPCQ). L-ornithine-binding positions include asparagine 162, aspartate 221, and 225–226 (SI). Residues 260–261 (CL) and arginine 288 each bind carbamoyl phosphate.

This sequence belongs to the aspartate/ornithine carbamoyltransferase superfamily. OTCase family.

Its subcellular location is the cytoplasm. The enzyme catalyses carbamoyl phosphate + L-ornithine = L-citrulline + phosphate + H(+). Its pathway is amino-acid biosynthesis; L-arginine biosynthesis; L-arginine from L-ornithine and carbamoyl phosphate: step 1/3. Its function is as follows. Reversibly catalyzes the transfer of the carbamoyl group from carbamoyl phosphate (CP) to the N(epsilon) atom of ornithine (ORN) to produce L-citrulline. In Cenarchaeum symbiosum (strain A), this protein is Ornithine carbamoyltransferase.